Here is a 141-residue protein sequence, read N- to C-terminus: Nucleoside diphosphate kinase (141 aa).

ATP-binding residues include Lys11, Phe59, Arg87, Thr93, Arg104, and Asn114. His117 acts as the Pros-phosphohistidine intermediate in catalysis.

This sequence belongs to the NDK family. In terms of assembly, homotetramer. Mg(2+) is required as a cofactor.

The protein resides in the cytoplasm. The enzyme catalyses a 2'-deoxyribonucleoside 5'-diphosphate + ATP = a 2'-deoxyribonucleoside 5'-triphosphate + ADP. It carries out the reaction a ribonucleoside 5'-diphosphate + ATP = a ribonucleoside 5'-triphosphate + ADP. Major role in the synthesis of nucleoside triphosphates other than ATP. The ATP gamma phosphate is transferred to the NDP beta phosphate via a ping-pong mechanism, using a phosphorylated active-site intermediate. This Bordetella petrii (strain ATCC BAA-461 / DSM 12804 / CCUG 43448) protein is Nucleoside diphosphate kinase.